The following is a 303-amino-acid chain: MEDYVKIEKIGEGTYGVVYKGRHKSTGQVVAMKKIRLESEEEGVPSTAVREVSLLQELKHPNVVRLLDVLMQESRLYLIFEFLSMDLKKYLDSIPSGQYMDPMLVKSYLYQILEGIYFCHRRRVLHRDLKPQNLLIDNKGVIKLADFGLARAFGVPVRVYTHEVVTLWYRAPEVLLGSPRYSTPVDVWSTGTIFAELATKKPLFHGDSEIDQLFRIFRTLGTPNNDVWPDVESLPDYKNTFPKWKGGSLSSMVKNLDKNGLDLLAKMLIYNPPKRISAREAMTHPYFDDLDKSTLPAACINGV.

Positions 4 to 287 constitute a Protein kinase domain; it reads YVKIEKIGEG…AREAMTHPYF (284 aa). ATP is bound by residues 10-18 and Lys33; that span reads IGEGTYGVV. A Phosphothreonine modification is found at Thr14. Tyr15 is subject to Phosphotyrosine; by wee1 and wee2. Catalysis depends on Asp128, which acts as the Proton acceptor. Phosphothreonine; by cak is present on Thr161.

This sequence belongs to the protein kinase superfamily. CMGC Ser/Thr protein kinase family. CDC2/CDKX subfamily. In terms of assembly, forms a stable but non-covalent complex with cyclin B in mature oocytes. In terms of processing, phosphorylation at Tyr-15 by wee1 and wee2 inhibits the protein kinase activity and acts negative regulator of entry into mitosis (G2 to M transition).

The protein localises to the nucleus. It localises to the cytoplasm. The protein resides in the cytoskeleton. Its subcellular location is the microtubule organizing center. It is found in the centrosome. The catalysed reaction is L-seryl-[protein] + ATP = O-phospho-L-seryl-[protein] + ADP + H(+). It carries out the reaction L-threonyl-[protein] + ATP = O-phospho-L-threonyl-[protein] + ADP + H(+). It catalyses the reaction [DNA-directed RNA polymerase] + ATP = phospho-[DNA-directed RNA polymerase] + ADP + H(+). Its activity is regulated as follows. Phosphorylation at Thr-14 or Tyr-15 inactivates the enzyme, while phosphorylation at Thr-161 activates it. In terms of biological role, plays a key role in the control of the eukaryotic cell cycle by modulating the centrosome cycle as well as mitotic onset; promotes G2-M transition via association with multiple interphase cyclins. During G2 and early mitosis, CDC25A/B/C-mediated dephosphorylation activates CDK1/cyclin complexes which phosphorylate several substrates that trigger at least centrosome separation, Golgi dynamics, nuclear envelope breakdown and chromosome condensation. Once chromosomes are condensed and aligned at the metaphase plate, CDK1 activity is switched off by WEE1- and PKMYT1-mediated phosphorylation to allow sister chromatid separation, chromosome decondensation, reformation of the nuclear envelope and cytokinesis. Catalyzes lamin (LMNA, LMNB1 and LMNB2) phosphorylation at the onset of mitosis, promoting nuclear envelope breakdown. This is Cyclin-dependent kinase 1 (cdk1) from Oryzias luzonensis (Luzon ricefish).